A 235-amino-acid chain; its full sequence is 2,3,4,5-tetrahydropyridine-2,6-dicarboxylate N-acetyltransferase (235 aa).

This sequence belongs to the transferase hexapeptide repeat family. DapH subfamily.

The enzyme catalyses (S)-2,3,4,5-tetrahydrodipicolinate + acetyl-CoA + H2O = L-2-acetamido-6-oxoheptanedioate + CoA. The protein operates within amino-acid biosynthesis; L-lysine biosynthesis via DAP pathway; LL-2,6-diaminopimelate from (S)-tetrahydrodipicolinate (acetylase route): step 1/3. In terms of biological role, catalyzes the transfer of an acetyl group from acetyl-CoA to tetrahydrodipicolinate. The chain is 2,3,4,5-tetrahydropyridine-2,6-dicarboxylate N-acetyltransferase from Anoxybacillus flavithermus (strain DSM 21510 / WK1).